We begin with the raw amino-acid sequence, 527 residues long: MLKLLVLGVLLHDVSLSGQDEAPPKADGIPGEPLFNYASIRLPEEHIPFFLHNNRHIATVCKKDSHCPYKKHLENLKYCWGYEKSCKPEFRFGYPVCTYIDMGWTDTLESAQDIFWKQADFGYAGERLEELHVLCQPEEPHDSSLLCSRYLQYCRAANLYLDLRNIKRNHDRFKEDFFQSGEIGGHCTLDTQTLLSEGQRKSPLQSWFAELQSYTELNFRPIEDAKCDVVIEKPTYFMKLDAGVNMYHHFCDFVNLYITQHVNNSFSTDVYIVMWDTSSYGYGDLFSDTWKAFTDYDVIHLKTYDSKRVCFKEAVFSLLPRMRYGLFYNTPLISGCQNTGLFRAFSQHVLHRLNITQEGPKDGKIRVTILARSTEYRKILNQNELVNALKTVSTLEVQIVDYKYKELGFLDQLRITHNTDIFIGMHGAGLTHLLFLPDWAAVFELYNCEDERCYLDLARLRGVHYITWRRQNKVFPQDKGHHPTLGEHPKFTNYSFDVEEFMYLVLQAADHVLQHPKWPFKKKRDEL.

Residues 1-17 (MLKLLVLGVLLHDVSLS) form the signal peptide. A Required for optimal activity motif is present at residues 295–297 (DYD). Asn-354 carries an N-linked (GlcNAc...) asparagine glycan. Residues 524–527 (RDEL) carry the Prevents secretion from ER motif.

The protein belongs to the glycosyltransferase 61 family.

The protein localises to the endoplasmic reticulum lumen. The enzyme catalyses L-seryl-[protein] + UDP-N-acetyl-alpha-D-glucosamine = 3-O-(N-acetyl-beta-D-glucosaminyl)-L-seryl-[protein] + UDP + H(+). It catalyses the reaction L-threonyl-[protein] + UDP-N-acetyl-alpha-D-glucosamine = 3-O-(N-acetyl-beta-D-glucosaminyl)-L-threonyl-[protein] + UDP + H(+). Catalyzes the transfer of a single N-acetylglucosamine from UDP-GlcNAc to a serine or threonine residue in extracellular proteins resulting in their modification with a beta-linked N-acetylglucosamine (O-GlcNAc). Specifically glycosylates the Thr residue located between the fifth and sixth conserved cysteines of folded EGF-like domains. This is EGF domain-specific O-linked N-acetylglucosamine transferase (EOGT) from Canis lupus familiaris (Dog).